Here is a 387-residue protein sequence, read N- to C-terminus: Chaperone protein DnaJ (387 aa).

Residues 4 to 68 (DFYDVLGVSR…EKRQMYDQLG (65 aa)) enclose the J domain. The tract at residues 76-135 (EKRGGVGGGGNSSGGSARGDPFGGMGGQGSPFGDIFEQFFGGGQGQRRQGNRPRQGQNLQ) is disordered. The segment covering 80-105 (GVGGGGNSSGGSARGDPFGGMGGQGS) has biased composition (gly residues). Over residues 121–133 (QRRQGNRPRQGQN) the composition is skewed to low complexity. A CR-type zinc finger spans residues 148–230 (GVEKQFTVRR…CNGDGVTRQE (83 aa)). 8 residues coordinate Zn(2+): Cys161, Cys164, Cys178, Cys181, Cys204, Cys207, Cys218, and Cys221. 4 CXXCXGXG motif repeats span residues 161–168 (CPDCNGRG), 178–185 (CPQCNGQG), 204–211 (CPRCDGSG), and 218–225 (CSTCNGDG).

Belongs to the DnaJ family. Homodimer. Requires Zn(2+) as cofactor.

It is found in the cytoplasm. Participates actively in the response to hyperosmotic and heat shock by preventing the aggregation of stress-denatured proteins and by disaggregating proteins, also in an autonomous, DnaK-independent fashion. Unfolded proteins bind initially to DnaJ; upon interaction with the DnaJ-bound protein, DnaK hydrolyzes its bound ATP, resulting in the formation of a stable complex. GrpE releases ADP from DnaK; ATP binding to DnaK triggers the release of the substrate protein, thus completing the reaction cycle. Several rounds of ATP-dependent interactions between DnaJ, DnaK and GrpE are required for fully efficient folding. Also involved, together with DnaK and GrpE, in the DNA replication of plasmids through activation of initiation proteins. The polypeptide is Chaperone protein DnaJ (Haloquadratum walsbyi (strain DSM 16790 / HBSQ001)).